A 162-amino-acid polypeptide reads, in one-letter code: Malaria protein EXP-1 (162 aa).

Residues 1–22 (MKILSVFFLVLFFIIFNKESLA) form the signal peptide. A helical membrane pass occupies residues 80–101 (VLAGLLGVVSTVLLGGVGLVLY). Positions 109–162 (PFKIGSSDPADNANPDADSESNGEPNADPQVTAQDVTPEQPQGDDNNLVSGPEH) are disordered. Low complexity predominate over residues 114–130 (SSDPADNANPDADSESN). The segment at 120–137 (NANPDADSESNGEPNADP) is epitope (deduced). Over residues 137–162 (PQVTAQDVTPEQPQGDDNNLVSGPEH) the composition is skewed to polar residues.

It localises to the parasitophorous vacuole membrane. The protein is Malaria protein EXP-1 (EXP-1) of Plasmodium falciparum.